A 420-amino-acid chain; its full sequence is Tryptophan synthase beta chain (420 aa).

The residue at position 100 (lysine 100) is an N6-(pyridoxal phosphate)lysine.

Belongs to the TrpB family. Tetramer of two alpha and two beta chains. Requires pyridoxal 5'-phosphate as cofactor.

It catalyses the reaction (1S,2R)-1-C-(indol-3-yl)glycerol 3-phosphate + L-serine = D-glyceraldehyde 3-phosphate + L-tryptophan + H2O. The protein operates within amino-acid biosynthesis; L-tryptophan biosynthesis; L-tryptophan from chorismate: step 5/5. Functionally, the beta subunit is responsible for the synthesis of L-tryptophan from indole and L-serine. This is Tryptophan synthase beta chain from Pyrobaculum islandicum (strain DSM 4184 / JCM 9189 / GEO3).